Reading from the N-terminus, the 244-residue chain is MKIDLNADLGEGCASDAELLTLVSSANIACGFHAGDAQIMQACVREAIKNGVAIGAHPSFPDRENFGRSAMQLPPETVYAQTLYQIGALATIARAQGGVMRHVKPHGMLYNQAAKEAQLADAIARAVYACDPALILVGLAGSELIRAGKQYGLTTREEVFADRGYQADGSLVPRSQRGALIENEEQALAQTLEMVQHGRVKSITGEWATVTAQTVCLHGDGEHALAFARRLRSTFAEKEIVVAA.

The protein belongs to the LamB/PxpA family. Forms a complex composed of PxpA, PxpB and PxpC.

The enzyme catalyses 5-oxo-L-proline + ATP + 2 H2O = L-glutamate + ADP + phosphate + H(+). Functionally, catalyzes the cleavage of 5-oxoproline to form L-glutamate coupled to the hydrolysis of ATP to ADP and inorganic phosphate. This is 5-oxoprolinase subunit A from Shigella sonnei (strain Ss046).